The following is a 239-amino-acid chain: Small ribosomal subunit protein uS2c (239 aa).

It belongs to the universal ribosomal protein uS2 family.

It localises to the plastid. The protein resides in the organellar chromatophore. The chain is Small ribosomal subunit protein uS2c (rps2) from Paulinella chromatophora.